A 461-amino-acid chain; its full sequence is Asparagine--tRNA ligase (461 aa).

Belongs to the class-II aminoacyl-tRNA synthetase family. In terms of assembly, homodimer.

It is found in the cytoplasm. It catalyses the reaction tRNA(Asn) + L-asparagine + ATP = L-asparaginyl-tRNA(Asn) + AMP + diphosphate + H(+). The sequence is that of Asparagine--tRNA ligase from Oleidesulfovibrio alaskensis (strain ATCC BAA-1058 / DSM 17464 / G20) (Desulfovibrio alaskensis).